The following is a 339-amino-acid chain: Methylglutaconyl-CoA hydratase, mitochondrial (339 aa).

Residues 1 to 67 (MAAAVAAAPG…AGGPAPKRGY (67 aa)) constitute a mitochondrion transit peptide. Position 100 is an N6-acetyllysine; alternate (lysine 100). Residue lysine 100 is modified to N6-succinyllysine; alternate. The segment at 105 to 119 (KNLIKMLSKAVDALK) is RNA-binding. Position 109 is an N6-succinyllysine (lysine 109). An N6-acetyllysine; alternate mark is found at lysine 113 and lysine 144. Residues lysine 113 and lysine 144 each carry the N6-succinyllysine; alternate modification. N6-succinyllysine is present on residues lysine 148 and lysine 160. An N6-acetyllysine; alternate mark is found at lysine 204 and lysine 211. Lysine 204 and lysine 211 each carry N6-succinyllysine; alternate. Position 329 is an N6-succinyllysine (lysine 329).

The protein belongs to the enoyl-CoA hydratase/isomerase family. In terms of assembly, homohexamer.

The protein resides in the mitochondrion. It catalyses the reaction (3S)-3-hydroxy-3-methylglutaryl-CoA = 3-methyl-(2E)-glutaconyl-CoA + H2O. The catalysed reaction is (3S)-citramalyl-CoA = itaconyl-CoA + H2O. It carries out the reaction 3-hydroxyisovaleryl-CoA = 3-methylbut-2-enoyl-CoA + H2O. The enzyme catalyses (S)-3-hydroxyglutaryl-CoA = (2E)-glutaconyl-CoA + H2O. It participates in amino-acid degradation; L-leucine degradation; (S)-3-hydroxy-3-methylglutaryl-CoA from 3-isovaleryl-CoA: step 3/3. Functionally, catalyzes the fifth step in the leucine degradation pathway, the reversible hydration of 3-methylglutaconyl-CoA (3-MG-CoA) to 3-hydroxy-3-methylglutaryl-CoA (HMG-CoA). Can catalyze the reverse reaction but at a much lower rate in vitro. HMG-CoA is then quickly degraded by another enzyme (such as HMG-CoA lyase) to give acetyl-CoA and acetoacetate. Uses other substrates such as (2E)-glutaconyl-CoA efficiently in vitro, and to a lesser extent 3-methylcrotonyl-CoA (3-methyl-(2E)-butenoyl-CoA), crotonyl-CoA ((2E)-butenoyl-CoA) and 3-hydroxybutanoyl-CoA (the missing carboxylate reduces affinity to the active site). Originally it was identified as an RNA-binding protein as it binds to AU-rich elements (AREs) in vitro. AREs direct rapid RNA degradation and mRNA deadenylation. Might have itaconyl-CoA hydratase activity, converting itaconyl-CoA into citramalyl-CoA in the C5-dicarboxylate catabolism pathway. The C5-dicarboxylate catabolism pathway is required to detoxify itaconate, an antimicrobial metabolite and immunomodulator produced by macrophages during certain infections, that can act as a vitamin B12-poisoning metabolite. This is Methylglutaconyl-CoA hydratase, mitochondrial (AUH) from Homo sapiens (Human).